The sequence spans 401 residues: Chalcone synthase 4 (401 aa).

The active site involves cysteine 168.

It belongs to the thiolase-like superfamily. Chalcone/stilbene synthases family.

It catalyses the reaction (E)-4-coumaroyl-CoA + 3 malonyl-CoA + 3 H(+) = 2',4,4',6'-tetrahydroxychalcone + 3 CO2 + 4 CoA. The protein operates within secondary metabolite biosynthesis; flavonoid biosynthesis. Functionally, the primary product of this enzyme is 4,2',4',6'-tetrahydroxychalcone (also termed naringenin-chalcone or chalcone) which can under specific conditions spontaneously isomerize into naringenin. This is Chalcone synthase 4 (CHS4) from Sorghum bicolor (Sorghum).